The following is a 541-amino-acid chain: Nif-specific regulatory protein (541 aa).

Positions 23–158 constitute a GAF domain; it reads RLETTLNNFV…MAANLAGRAI (136 aa). Positions 170–191 are disordered; it reads TFAEEQQEQQNSRDEQSQSSAR. The region spanning 200-428 is the Sigma-54 factor interaction domain; sequence IIGESTALMT…LENCVRRTAT (229 aa). ATP contacts are provided by residues 228–235 and 291–300; these read GETGTGKE and ANGGTLLLDE. Positions 429-498 are inter-domain linker; that stretch reads LARSKTITSS…SAGVASNLIE (70 aa). A divalent metal cation is bound by residues C442 and C447. Residues 499 to 541 are C-terminal DNA-binding domain; that stretch reads RDRLISALEEAGWNQAKAARILEKTPRQVGYALRRHGVDVRKL. Positions 513 to 532 form a DNA-binding region, H-T-H motif; the sequence is QAKAARILEKTPRQVGYALR.

In terms of assembly, interacts with sigma-54.

Required for activation of most nif operons, which are directly involved in nitrogen fixation. The protein is Nif-specific regulatory protein (nifA) of Rhizobium meliloti (strain 1021) (Ensifer meliloti).